A 151-amino-acid chain; its full sequence is Probable cGMP 3',5'-cyclic phosphodiesterase subunit delta (151 aa).

It belongs to the PDE6D/unc-119 family. As to quaternary structure, interacts with Pde6.

It localises to the nucleus. It is found in the cytoplasm. The polypeptide is Probable cGMP 3',5'-cyclic phosphodiesterase subunit delta (Drosophila simulans (Fruit fly)).